We begin with the raw amino-acid sequence, 238 residues long: ATP-dependent Clp protease ATP-binding subunit CLPT1, chloroplastic (238 aa).

A chloroplast-targeting transit peptide spans 1–64; it reads MASYTVSFIP…VPKLRCLTSA (64 aa). Residues 83–228 form the Clp R domain; the sequence is IPKWSARAIK…KEVEKSMNED (146 aa). 2 repeat regions span residues 86–151 and 163–228; these read WSAR…LGKS and LTEP…MNED.

It belongs to the ClpA/ClpB family. Monomer and homodimer. Binds to the CLP3-6 ring (P-ring). The dimers monomerize before association to the P-ring. Component of the chloroplastic Clp protease core complex which consist of at least 16 proteins: CLPP4 (3 copies), CLPP5 (3 copies), CLPR4 (2 copies), ClpP1 (1 copy), CLPP6 (1 copy), CLPR2 (1 copy), CLPT1 (1 copy), CLPT2 (1 copy) and 3 copies of CLPP3 and/or CLPR1 and/or CLPR3. Interacts with CLPC2 and CLPD. Interacts with CPN21. No interactions with CLPS1.

The protein localises to the plastid. It localises to the chloroplast. In terms of biological role, accessory protein regulating the assembly of the plastidial Clp protease system. CLPT1 first binds to the heptameric P-ring containing the CLP3-6 subunits followed by CLPT2, and only then does the P-ring combine with the R-ring composed of the clpP1 and CLPR1-4 subunits. Once the core complex is fully assembled, it then associates to the CLPC chaperone partner to form the functional protease. CLPT1 and CLPT2 are partially redundant. This is ATP-dependent Clp protease ATP-binding subunit CLPT1, chloroplastic from Arabidopsis thaliana (Mouse-ear cress).